A 238-amino-acid polypeptide reads, in one-letter code: Ribosomal RNA large subunit methyltransferase E (238 aa).

Positions 85, 87, 113, 129, and 153 each coordinate S-adenosyl-L-methionine. K193 functions as the Proton acceptor in the catalytic mechanism.

This sequence belongs to the class I-like SAM-binding methyltransferase superfamily. RNA methyltransferase RlmE family.

The protein resides in the cytoplasm. The catalysed reaction is uridine(2552) in 23S rRNA + S-adenosyl-L-methionine = 2'-O-methyluridine(2552) in 23S rRNA + S-adenosyl-L-homocysteine + H(+). Functionally, specifically methylates the uridine in position 2552 of 23S rRNA at the 2'-O position of the ribose in the fully assembled 50S ribosomal subunit. The chain is Ribosomal RNA large subunit methyltransferase E from Ruegeria sp. (strain TM1040) (Silicibacter sp.).